A 271-amino-acid chain; its full sequence is uncharacterized protein (271 aa).

This is an uncharacterized protein from Escherichia coli (strain K12).